The following is a 1214-amino-acid chain: Myosin-1 (1214 aa).

Residues 1–21 form a disordered region; it reads MAIIKRGARNKTAQEPAKRSA. The region spanning 36 to 715 is the Myosin motor domain; it reads VGVSDLTLLS…TLFALEHMRD (680 aa). Position 129–136 (129–136) interacts with ATP; sequence GESGAGKT. Phosphoserine is present on serine 357. Residues 404–486 form an actin-binding region; the sequence is SIGILDIYGF…PGIFAAMNDS (83 aa). 2 IQ domains span residues 719–739 and 740–765; these read YNMA…RIDS and ATRI…EGSK. The 191-residue stretch at 771 to 961 folds into the TH1 domain; sequence KERRTMSLLG…TILVRRGHPA (191 aa). Disordered stretches follow at residues 926-1090, 1129-1177, and 1193-1214; these read KPGK…SELP, HQGG…AAAQ, and NKMR…DDDW. The segment covering 965 to 980 has biased composition (basic residues); the sequence is QKKKPKKGKGHSKHHS. Low complexity-rich tracts occupy residues 981–1000 and 1037–1057; these read TSTS…APVS and AAQP…QKKV. Positions 1058 to 1067 are enriched in pro residues; it reads APPPPPPPPM. The SH3 domain maps to 1069–1131; the sequence is SSEPKYEAAY…PTNYVVKHQG (63 aa). The span at 1157 to 1177 shows a compositional bias: low complexity; that stretch reads VSSSQSETATTATPASVAAAQ. Over residues 1200 to 1214 the composition is skewed to acidic residues; the sequence is DGEDNGNDDDDDDDW.

The protein belongs to the TRAFAC class myosin-kinesin ATPase superfamily. Myosin family. Post-translationally, phosphorylation of the TEDS site (Ser-357) is required for the polarization of the actin cytoskeleton. Phosphorylation probably activates the myosin-I ATPase activity.

It localises to the cytoplasm. The protein localises to the cytoskeleton. The protein resides in the actin patch. Its function is as follows. Type-I myosin implicated in the organization of the actin cytoskeleton. Required for proper actin cytoskeleton polarization. At the cell cortex, assembles in patch-like structures together with proteins from the actin-polymerizing machinery and promotes actin assembly. Functions as actin nucleation-promoting factor (NPF) for the Arp2/3 complex. The chain is Myosin-1 (MYO1) from Vanderwaltozyma polyspora (strain ATCC 22028 / DSM 70294 / BCRC 21397 / CBS 2163 / NBRC 10782 / NRRL Y-8283 / UCD 57-17) (Kluyveromyces polysporus).